The sequence spans 194 residues: Ribonuclease HII (194 aa).

In terms of domain architecture, RNase H type-2 spans 16 to 194 (CIVAGIDEAG…PYHRRSFRCC (179 aa)). A divalent metal cation-binding residues include D22, E23, and D113.

The protein belongs to the RNase HII family. Mn(2+) is required as a cofactor. Mg(2+) serves as cofactor.

The protein resides in the cytoplasm. It carries out the reaction Endonucleolytic cleavage to 5'-phosphomonoester.. In terms of biological role, endonuclease that specifically degrades the RNA of RNA-DNA hybrids. In Rickettsia massiliae (strain Mtu5), this protein is Ribonuclease HII.